The sequence spans 149 residues: Ribosome-binding factor A (149 aa).

The interval 125 to 149 (FGSADEVLNEDEGATDDTDDTKGKD) is disordered. Positions 131 to 143 (VLNEDEGATDDTD) are enriched in acidic residues.

It belongs to the RbfA family. In terms of assembly, monomer. Binds 30S ribosomal subunits, but not 50S ribosomal subunits or 70S ribosomes.

It is found in the cytoplasm. Its function is as follows. One of several proteins that assist in the late maturation steps of the functional core of the 30S ribosomal subunit. Associates with free 30S ribosomal subunits (but not with 30S subunits that are part of 70S ribosomes or polysomes). Required for efficient processing of 16S rRNA. May interact with the 5'-terminal helix region of 16S rRNA. The protein is Ribosome-binding factor A of Shewanella sp. (strain W3-18-1).